We begin with the raw amino-acid sequence, 373 residues long: Peroxisomal biogenesis factor 3 (373 aa).

Topologically, residues 1–15 (MLRSVWNFLKRHKKK) are cytoplasmic. Residues 1–45 (MLRSVWNFLKRHKKKCIFLGTVLGGVYILGKYGQKKIREIQEREA) form a targeting to peroxisomes region. Residues 16–36 (CIFLGTVLGGVYILGKYGQKK) form a helical membrane-spanning segment. The Peroxisomal portion of the chain corresponds to 37 to 116 (IREIQEREAA…LKIISFTRST (80 aa)). Residues 117-140 (VAVYSTCMLVVLLRVQLNIIGGYI) traverse the membrane as a helical segment. Residues 120–136 (YSTCMLVVLLRVQLNII) are interaction with PEX19. Residues 141-373 (YLDNAAVGKN…AFSTPQQLEK (233 aa)) lie on the Cytoplasmic side of the membrane.

It belongs to the peroxin-3 family. Interacts with PEX19. As to expression, found in all examined tissues.

It localises to the peroxisome membrane. Its function is as follows. Involved in peroxisome biosynthesis and integrity. Assembles membrane vesicles before the matrix proteins are translocated. As a docking factor for PEX19, is necessary for the import of peroxisomal membrane proteins in the peroxisomes. The chain is Peroxisomal biogenesis factor 3 (PEX3) from Homo sapiens (Human).